The sequence spans 184 residues: Interferon alpha-1 (184 aa).

The first 23 residues, 1–23 (MALPVSLLMALVVLSCHSICSLG), serve as a signal peptide directing secretion. Cystine bridges form between Cys-24–Cys-122 and Cys-52–Cys-162.

The protein belongs to the alpha/beta interferon family. In terms of assembly, interacts with CR2.

The protein resides in the secreted. Produced by macrophages, IFN-alpha have antiviral activities. Interferon stimulates the production of two enzymes: a protein kinase and an oligoadenylate synthetase. The chain is Interferon alpha-1 from Equus caballus (Horse).